We begin with the raw amino-acid sequence, 126 residues long: MANVDELLETFGNMTLLELSDFVKKFEEKFEVTAAAPVAVAAAGGAAAPAEAAEEQDEFDVILEGAGDKKIQVIKVVREIVSGLGLKEAKDLVEGAPKPILEKVAKDAADAAKAKLEEAGAKVSVK.

This sequence belongs to the bacterial ribosomal protein bL12 family. As to quaternary structure, homodimer. Part of the ribosomal stalk of the 50S ribosomal subunit. Forms a multimeric L10(L12)X complex, where L10 forms an elongated spine to which 2 to 4 L12 dimers bind in a sequential fashion. Binds GTP-bound translation factors.

Forms part of the ribosomal stalk which helps the ribosome interact with GTP-bound translation factors. Is thus essential for accurate translation. This Nocardia farcinica (strain IFM 10152) protein is Large ribosomal subunit protein bL12.